A 424-amino-acid chain; its full sequence is UDP-N-acetylglucosamine 1-carboxyvinyltransferase (424 aa).

Position 22 to 23 (22 to 23 (KN)) interacts with phosphoenolpyruvate. Arginine 96 contacts UDP-N-acetyl-alpha-D-glucosamine. The active-site Proton donor is cysteine 120. A 2-(S-cysteinyl)pyruvic acid O-phosphothioketal modification is found at cysteine 120. UDP-N-acetyl-alpha-D-glucosamine contacts are provided by residues 125–129 (RPVDQ), aspartate 312, and isoleucine 334.

The protein belongs to the EPSP synthase family. MurA subfamily.

It is found in the cytoplasm. It catalyses the reaction phosphoenolpyruvate + UDP-N-acetyl-alpha-D-glucosamine = UDP-N-acetyl-3-O-(1-carboxyvinyl)-alpha-D-glucosamine + phosphate. Its pathway is cell wall biogenesis; peptidoglycan biosynthesis. Cell wall formation. Adds enolpyruvyl to UDP-N-acetylglucosamine. The sequence is that of UDP-N-acetylglucosamine 1-carboxyvinyltransferase from Polynucleobacter necessarius subsp. necessarius (strain STIR1).